The sequence spans 408 residues: LL-diaminopimelate aminotransferase (408 aa).

Residues tyrosine 15 and glycine 42 each coordinate substrate. Pyridoxal 5'-phosphate is bound by residues tyrosine 72, 108–109, tyrosine 132, asparagine 186, tyrosine 217, and 245–247; these read AK and SFS. Positions 109, 132, and 186 each coordinate substrate. N6-(pyridoxal phosphate)lysine is present on lysine 248. Arginine 256 and asparagine 291 together coordinate pyridoxal 5'-phosphate. The substrate site is built by asparagine 291 and arginine 386.

This sequence belongs to the class-I pyridoxal-phosphate-dependent aminotransferase family. LL-diaminopimelate aminotransferase subfamily. As to quaternary structure, homodimer. It depends on pyridoxal 5'-phosphate as a cofactor.

The enzyme catalyses (2S,6S)-2,6-diaminopimelate + 2-oxoglutarate = (S)-2,3,4,5-tetrahydrodipicolinate + L-glutamate + H2O + H(+). Its pathway is amino-acid biosynthesis; L-lysine biosynthesis via DAP pathway; LL-2,6-diaminopimelate from (S)-tetrahydrodipicolinate (aminotransferase route): step 1/1. Involved in the synthesis of meso-diaminopimelate (m-DAP or DL-DAP), required for both lysine and peptidoglycan biosynthesis. Catalyzes the direct conversion of tetrahydrodipicolinate to LL-diaminopimelate. This is LL-diaminopimelate aminotransferase from Desulfotalea psychrophila (strain LSv54 / DSM 12343).